The following is a 344-amino-acid chain: Tripartite motif-containing protein 44 (344 aa).

Disordered regions lie at residues 1-25 (MASG…EPDE) and 68-165 (TPPA…EFDP). Residues 75-92 (GAGKEEAEVKVEQEREIE) show a composition bias toward basic and acidic residues. The segment covering 93–165 (SEAGEESESE…ETEAESEFDP (73 aa)) has biased composition (acidic residues). A B box-type zinc finger spans residues 174 to 215 (VAKRKCPDHGLDLSTYCQEDRQLICVLCPVIGAHQGHQLSTL). Zn(2+) is bound by residues C179, H182, C201, and H207. Residues 290–325 (AHVTEILADIQSHMDRLMTQMAQAKEQLDTSNESAE) are a coiled coil. A disordered region spans residues 309 to 344 (QMAQAKEQLDTSNESAEPKAEGDEEGPSGASEEEDT). The span at 330-344 (GDEEGPSGASEEEDT) shows a compositional bias: acidic residues. Residues S336 and S339 each carry the phosphoserine modification.

In terms of assembly, interacts (via coiled coil) with TRIM17 (via coiled coil).

Functionally, may play a role in the process of differentiation and maturation of neuronal cells. May regulate the activity of TRIM17. Is a negative regulator of PAX6 expression. The chain is Tripartite motif-containing protein 44 (TRIM44) from Pongo abelii (Sumatran orangutan).